Reading from the N-terminus, the 95-residue chain is Antitoxin VapB (95 aa).

In terms of biological role, antitoxin component of a type II toxin-antitoxin (TA) system. Partially neutralizes the RNase activity of cognate toxin VapC. The protein is Antitoxin VapB of Rickettsia bellii (strain RML369-C).